Here is a 330-residue protein sequence, read N- to C-terminus: Aspartate--ammonia ligase (330 aa).

This sequence belongs to the class-II aminoacyl-tRNA synthetase family. AsnA subfamily.

It localises to the cytoplasm. The catalysed reaction is L-aspartate + NH4(+) + ATP = L-asparagine + AMP + diphosphate + H(+). Its pathway is amino-acid biosynthesis; L-asparagine biosynthesis; L-asparagine from L-aspartate (ammonia route): step 1/1. The sequence is that of Aspartate--ammonia ligase from Escherichia fergusonii (strain ATCC 35469 / DSM 13698 / CCUG 18766 / IAM 14443 / JCM 21226 / LMG 7866 / NBRC 102419 / NCTC 12128 / CDC 0568-73).